The sequence spans 200 residues: ADP-ribosylation factor-like protein 4A (200 aa).

G2 carries the N-myristoyl glycine lipid modification. GTP-binding positions include 27-34 (GLDCAGKT), 75-79 (DVGGQ), and 134-137 (NKQD).

This sequence belongs to the small GTPase superfamily. Arf family. As to quaternary structure, interacts with CYTH2. Interacts with KPNA2; the interaction is direct. Does not interact with ARL4A. Post-translationally, myristoylated.

The protein resides in the cell membrane. It is found in the cytoplasm. It localises to the nucleus. Its subcellular location is the nucleolus. Functionally, small GTP-binding protein which cycles between an inactive GDP-bound and an active GTP-bound form, and the rate of cycling is regulated by guanine nucleotide exchange factors (GEF) and GTPase-activating proteins (GAP). GTP-binding protein that does not act as an allosteric activator of the cholera toxin catalytic subunit. Recruits CYTH1, CYTH2, CYTH3 and CYTH4 to the plasma membrane in GDP-bound form. The chain is ADP-ribosylation factor-like protein 4A (ARL4A) from Homo sapiens (Human).